Here is a 203-residue protein sequence, read N- to C-terminus: Translation initiation factor IF-3 (203 aa).

Residues 172 to 182 (EAPKNEKKTKE) are compositionally biased toward basic and acidic residues. The disordered stretch occupies residues 172–203 (EAPKNEKKTKENNPPFNRINLMKGENHAKNED).

Belongs to the IF-3 family. Monomer.

It localises to the cytoplasm. Its function is as follows. IF-3 binds to the 30S ribosomal subunit and shifts the equilibrium between 70S ribosomes and their 50S and 30S subunits in favor of the free subunits, thus enhancing the availability of 30S subunits on which protein synthesis initiation begins. The chain is Translation initiation factor IF-3 from Helicobacter pylori (strain J99 / ATCC 700824) (Campylobacter pylori J99).